The primary structure comprises 713 residues: Forkhead box protein P2 (713 aa).

Positions 1–28 are enriched in polar residues; sequence MMQESATETISNSSMNQNGMSTLSSQLD. Disordered regions lie at residues 1-44 and 283-337; these read MMQE…SSEV and KHGG…TGAS. Low complexity predominate over residues 290-303; it reads TTNNSSSTTSSTTS. Over residues 313 to 322 the composition is skewed to polar residues; the sequence is SIVNGQSSVL. Residues 324–335 show a composition bias toward basic and acidic residues; sequence ARRDSSSHEETG. Residues 344-369 form a C2H2-type zinc finger; sequence GVCKWPGCESICEDFGQFLKHLNNEH. Residues 386-407 are leucine-zipper; sequence VQQLEIQLSKERERLQAMMTHL. The tract at residues 420-424 is CTBP1-binding; sequence PLNLV. Residues 436–457 show a composition bias toward low complexity; it reads TSPQSLPQTPTTPTAPVTPITQ. Residues 436–463 form a disordered region; it reads TSPQSLPQTPTTPTAPVTPITQGPSVIT. The segment at residues 502 to 592 is a DNA-binding region (fork-head); that stretch reads RPPFTYATLI…SQKITGSPTL (91 aa). 2 disordered regions span residues 647-666 and 676-713; these read LDHIDSNGNSSPGCSPQPHI and VIAEDEDCPMSLVTTANHSPELEDDREIEEEPLSEDLE. Residues 697-713 show a composition bias toward acidic residues; that stretch reads LEDDREIEEEPLSEDLE.

As to quaternary structure, forms homodimers and heterodimers with FOXP1 and FOXP4. Dimerization is required for DNA-binding. Interacts with CTBP1. Interacts with FOXP1. Interacts with TBR1. Interacts with ZMYM2.

It localises to the nucleus. In terms of biological role, transcriptional repressor that may play a role in the specification and differentiation of lung epithelium. May also play a role in developing neural, gastrointestinal and cardiovascular tissues. Can act with CTBP1 to synergistically repress transcription but CTPBP1 is not essential. Plays a role in synapse formation by regulating SRPX2 levels. The polypeptide is Forkhead box protein P2 (FOXP2) (Gorilla gorilla gorilla (Western lowland gorilla)).